The following is a 482-amino-acid chain: Dual specificity protein phosphatase 10 (482 aa).

The Rhodanese domain occupies 168 to 285 (PSQGPVIIDC…FKQNHENLCD (118 aa)). Positions 199-215 (KISRRRLQQGKITVLDL) are interaction with MAP kinases. The Tyrosine-protein phosphatase domain maps to 321 to 464 (ELTPILPFLF…LLEFEEDLNN (144 aa)). C408 (phosphocysteine intermediate) is an active-site residue.

It belongs to the protein-tyrosine phosphatase family. Non-receptor class dual specificity subfamily. As to quaternary structure, monomer. Interacts with MAPK14. As to expression, expressed in keratinocytes (at protein level). Detected in brain.

It is found in the cytoplasm. The protein resides in the nucleus. It carries out the reaction O-phospho-L-tyrosyl-[protein] + H2O = L-tyrosyl-[protein] + phosphate. The enzyme catalyses O-phospho-L-seryl-[protein] + H2O = L-seryl-[protein] + phosphate. It catalyses the reaction O-phospho-L-threonyl-[protein] + H2O = L-threonyl-[protein] + phosphate. Functionally, protein phosphatase involved in the inactivation of MAP kinases. Has a specificity for the MAPK11/MAPK12/MAPK13/MAPK14 subfamily. It preferably dephosphorylates p38. The protein is Dual specificity protein phosphatase 10 (DUSP10) of Homo sapiens (Human).